A 479-amino-acid polypeptide reads, in one-letter code: Ribulose bisphosphate carboxylase large chain (479 aa).

Positions 1–2 are excised as a propeptide; it reads MS. Asn-123 and Thr-173 together coordinate substrate. Lys-175 functions as the Proton acceptor in the catalytic mechanism. Residue Lys-177 coordinates substrate. Positions 201, 203, and 204 each coordinate Mg(2+). The residue at position 201 (Lys-201) is an N6-carboxylysine. Ser-208 is modified (phosphoserine). The active-site Proton acceptor is His-294. Residues Arg-295 and His-327 each contribute to the substrate site. At Thr-330 the chain carries Phosphothreonine. Ser-379 is a substrate binding site.

It belongs to the RuBisCO large chain family. Type I subfamily. In terms of assembly, heterohexadecamer of 8 large chains and 8 small chains; disulfide-linked. The disulfide link is formed within the large subunit homodimers. Requires Mg(2+) as cofactor. Post-translationally, the disulfide bond which can form in the large chain dimeric partners within the hexadecamer appears to be associated with oxidative stress and protein turnover.

It localises to the plastid. Its subcellular location is the chloroplast. It catalyses the reaction 2 (2R)-3-phosphoglycerate + 2 H(+) = D-ribulose 1,5-bisphosphate + CO2 + H2O. The enzyme catalyses D-ribulose 1,5-bisphosphate + O2 = 2-phosphoglycolate + (2R)-3-phosphoglycerate + 2 H(+). In terms of biological role, ruBisCO catalyzes two reactions: the carboxylation of D-ribulose 1,5-bisphosphate, the primary event in carbon dioxide fixation, as well as the oxidative fragmentation of the pentose substrate in the photorespiration process. Both reactions occur simultaneously and in competition at the same active site. The sequence is that of Ribulose bisphosphate carboxylase large chain from Arabis hirsuta (Hairy rock-cress).